A 212-amino-acid chain; its full sequence is Ras-related protein Rab-2A (212 aa).

GTP is bound by residues glycine 16, valine 17, glycine 18, lysine 19, serine 20, cysteine 21, and threonine 38. Serine 20 provides a ligand contact to Mg(2+). The short motif at 37-42 (LTIGVE) is the Switch 1 element. Residues threonine 38 and aspartate 61 each coordinate Mg(2+). Residues 63–72 (AGQESFRSIT) carry the Switch 2 motif. The GTP site is built by glycine 64, asparagine 119, lysine 120, aspartate 122, alanine 150, and lysine 151. S-geranylgeranyl cysteine attachment occurs at residues cysteine 211 and cysteine 212.

The protein belongs to the small GTPase superfamily. Rab family. As to quaternary structure, interacts with PRKCI. Interacts with TRIP11. Interacts (in GTP-bound form) with GARIN1B. The cofactor is Mg(2+). Prenylated. Prenylation is required for association with cellular membranes.

The protein resides in the endoplasmic reticulum-Golgi intermediate compartment membrane. It is found in the melanosome. Its subcellular location is the endoplasmic reticulum membrane. The protein localises to the golgi apparatus membrane. It localises to the cytoplasmic vesicle. The protein resides in the secretory vesicle. It is found in the acrosome. The catalysed reaction is GTP + H2O = GDP + phosphate + H(+). With respect to regulation, regulated by guanine nucleotide exchange factors (GEFs) which promote the exchange of bound GDP for free GTP, GTPase activating proteins (GAPs) which increase the GTP hydrolysis activity, and GDP dissociation inhibitors (GDIs) which inhibit the dissociation of the nucleotide from the GTPase. The small GTPases Rab are key regulators of intracellular membrane trafficking, from the formation of transport vesicles to their fusion with membranes. Rabs cycle between active GTP-bound and inactive GDP-bound states. In their active state, drive transport of vesicular carriers from donor organelles to acceptor organelles to regulate the membrane traffic that maintains organelle identity and morphology. RAB2A regulates autophagy by promoting autophagosome-lysosome fusion via recruitment of the HOPS endosomal tethering complex; this process involves autophagosomal RAB2A and lysosomal RAB39A recruitment of HOPS subcomplexes VPS39-VPS11 and VPS41-VPS16-VPS18-VPS33A, respectively, which assemble into a functional complex to mediate membrane tethering and SNAREs-driven membrane fusion. Required for protein transport from the endoplasmic reticulum to the Golgi complex. Regulates the compacted morphology of the Golgi. Together with RAB2B, redundantly required for efficient autophagic flux. This Gallus gallus (Chicken) protein is Ras-related protein Rab-2A (RAB2A).